The sequence spans 57 residues: Large ribosomal subunit protein bL32 (57 aa).

Residues 1–19 (MAVPKRRMSRSNTRSRRSQ) show a composition bias toward basic residues. Residues 1-22 (MAVPKRRMSRSNTRSRRSQWKA) form a disordered region.

The protein belongs to the bacterial ribosomal protein bL32 family.

The polypeptide is Large ribosomal subunit protein bL32 (Rhodococcus jostii (strain RHA1)).